A 154-amino-acid polypeptide reads, in one-letter code: Prefoldin subunit alpha (154 aa).

The disordered stretch occupies residues 123–154; it reads EAEQLEQQAQQAQQQMMQQQMQAQQQPQDGEQ. A compositionally biased stretch (low complexity) spans 127 to 154; sequence LEQQAQQAQQQMMQQQMQAQQQPQDGEQ.

It belongs to the prefoldin alpha subunit family. Heterohexamer of two alpha and four beta subunits.

The protein localises to the cytoplasm. Molecular chaperone capable of stabilizing a range of proteins. Seems to fulfill an ATP-independent, HSP70-like function in archaeal de novo protein folding. In Halobacterium salinarum (strain ATCC 29341 / DSM 671 / R1), this protein is Prefoldin subunit alpha.